We begin with the raw amino-acid sequence, 96 residues long: C-C motif chemokine 20 (96 aa).

A signal peptide spans 1–26 (MCCTKSLLLAALMSVLLLHLCGESEA). Intrachain disulfides connect Cys32-Cys58 and Cys33-Cys74.

This sequence belongs to the intercrine beta (chemokine CC) family. C-terminal processed forms which lack 1, 3 or 6 amino acids are produced by proteolytic cleavage after secretion from peripheral blood monocytes. Expressed in the seminal plasma, endometrial fluid and follicular fluid (at protein level). Expressed predominantly in the liver, lymph nodes, appendix, peripheral blood lymphocytes, and fetal lung. Low levels seen in thymus, prostate, testis, small intestine and colon.

Its subcellular location is the secreted. Its function is as follows. Acts as a ligand for C-C chemokine receptor CCR6. Signals through binding and activation of CCR6 and induces a strong chemotactic response and mobilization of intracellular calcium ions. The ligand-receptor pair CCL20-CCR6 is responsible for the chemotaxis of dendritic cells (DC), effector/memory T-cells and B-cells and plays an important role at skin and mucosal surfaces under homeostatic and inflammatory conditions, as well as in pathology, including cancer and various autoimmune diseases. CCL20 acts as a chemotactic factor that attracts lymphocytes and, slightly, neutrophils, but not monocytes. Involved in the recruitment of both the pro-inflammatory IL17 producing helper T-cells (Th17) and the regulatory T-cells (Treg) to sites of inflammation. Required for optimal migration of thymic natural regulatory T cells (nTregs) and DN1 early thymocyte progenitor cells. C-terminal processed forms have been shown to be equally chemotactically active for leukocytes. Positively regulates sperm motility and chemotaxis via its binding to CCR6 which triggers Ca2+ mobilization in the sperm which is important for its motility. Inhibits proliferation of myeloid progenitors in colony formation assays. May be involved in formation and function of the mucosal lymphoid tissues by attracting lymphocytes and dendritic cells towards epithelial cells. Possesses antibacterial activity towards E.coli ATCC 25922 and S.aureus ATCC 29213. The sequence is that of C-C motif chemokine 20 (CCL20) from Homo sapiens (Human).